The sequence spans 154 residues: uncharacterized protein (154 aa).

This is an uncharacterized protein from Aquifex aeolicus (strain VF5).